The chain runs to 152 residues: Protein CHLOROPLAST VESICULATION (152 aa).

Residues Met1–Leu22 constitute a chloroplast transit peptide. Residues Cys48 to Ile65 traverse the membrane as a helical segment. Positions Arg92–Val152 are important for chloroplast destabilization and the formation of CV-containing vesicles.

As to quaternary structure, interacts with the photosystem II subunit PsbO1 via its C-terminal region in the chloroplast thylakoid membrane and in CV-containing vesicles (CCVs). In terms of tissue distribution, mostly expressed in senescent and mature leaves but not in young leaves.

It localises to the plastid. Its subcellular location is the chloroplast membrane. It is found in the chloroplast thylakoid membrane. The protein localises to the chloroplast envelope. The protein resides in the vacuole. It localises to the vesicle. Triggers stress-induced chloroplast degradation, independently of autophagy and senescence-associated vacuoles. After targeting to the chloroplast, triggers its destabilization and subsequent disassembly, inducing the formation of CV-containing vesicles (CCVs) carrying stromal proteins, envelope membrane proteins, and thylakoid membrane proteins which are released from the chloroplasts and mobilized to the vacuole for proteolysis. This is Protein CHLOROPLAST VESICULATION from Arabidopsis thaliana (Mouse-ear cress).